The primary structure comprises 278 residues: HTH-type transcriptional activator RhaS (278 aa).

Residues 174 to 272 enclose the HTH araC/xylS-type domain; sequence NQLMAWLEEH…NWSPRDIRQG (99 aa). 2 consecutive DNA-binding regions (H-T-H motif) follow at residues 191–212 and 239–262; these read EAVA…KQHT and VTEI…RREF.

In terms of assembly, binds DNA as a dimer.

It localises to the cytoplasm. Functionally, activates expression of the rhaBAD and rhaT operons. In Salmonella schwarzengrund (strain CVM19633), this protein is HTH-type transcriptional activator RhaS.